Here is a 592-residue protein sequence, read N- to C-terminus: Syntaxin-binding protein 3 (592 aa).

Residues 1-255 are mediates interaction with DOC2B; the sequence is MAPPVSERGL…STVLHELTFQ (255 aa).

The protein belongs to the STXBP/unc-18/SEC1 family. As to quaternary structure, interacts with STX4. Interacts with DOC2B; the interaction is direct, occurs at the cell membrane, excludes interaction with STX4 and regulates glucose-stimulated insulin secretion. Phosphorylated by PKC in platelets in response to thrombin stimulation; phosphorylation inhibits binding to STX4. Ubiquitously expressed in all tissues tested.

It is found in the cytoplasm. The protein resides in the cytosol. It localises to the cell membrane. Together with STX4 and VAMP2, may play a role in insulin-dependent movement of GLUT4 and in docking/fusion of intracellular GLUT4-containing vesicles with the cell surface in adipocytes. This is Syntaxin-binding protein 3 (Stxbp3) from Mus musculus (Mouse).